Here is a 122-residue protein sequence, read N- to C-terminus: Flowering-promoting factor 1-like protein 3 (122 aa).

The disordered stretch occupies residues 16–36 (ENPGSEESSSAGDGGGGGRRK).

This sequence belongs to the FPF1 family.

This chain is Flowering-promoting factor 1-like protein 3, found in Oryza sativa subsp. japonica (Rice).